Here is a 142-residue protein sequence, read N- to C-terminus: Small ribosomal subunit protein uS12 (142 aa).

It belongs to the universal ribosomal protein uS12 family. Part of the 30S ribosomal subunit.

Functionally, with S4 and S5 plays an important role in translational accuracy. Located at the interface of the 30S and 50S subunits. The polypeptide is Small ribosomal subunit protein uS12 (Methanoculleus marisnigri (strain ATCC 35101 / DSM 1498 / JR1)).